A 246-amino-acid polypeptide reads, in one-letter code: Ribonuclease 3 (246 aa).

An RNase III domain is found at 8-137 (ANRLKTRLGF…LLGAIYLDQG (130 aa)). Glu-50 serves as a coordination point for Mg(2+). Asp-54 is a catalytic residue. Residues Asp-123 and Glu-126 each contribute to the Mg(2+) site. Glu-126 is an active-site residue. One can recognise a DRBM domain in the interval 164 to 233 (DYKTELQEIL…AKDAFQHLEG (70 aa)). The disordered stretch occupies residues 212-246 (SGHSKKEAEQQAAKDAFQHLEGMGKSGHKSAGPIR).

It belongs to the ribonuclease III family. In terms of assembly, homodimer. Mg(2+) serves as cofactor.

It localises to the cytoplasm. The enzyme catalyses Endonucleolytic cleavage to 5'-phosphomonoester.. Functionally, digests double-stranded RNA. Involved in the processing of primary rRNA transcript to yield the immediate precursors to the large and small rRNAs (23S and 16S). Processes some mRNAs, and tRNAs when they are encoded in the rRNA operon. Processes pre-crRNA and tracrRNA of type II CRISPR loci if present in the organism. This chain is Ribonuclease 3, found in Desulforamulus reducens (strain ATCC BAA-1160 / DSM 100696 / MI-1) (Desulfotomaculum reducens).